Consider the following 189-residue polypeptide: Elongation factor P (189 aa).

It belongs to the elongation factor P family.

The protein resides in the cytoplasm. It participates in protein biosynthesis; polypeptide chain elongation. Its function is as follows. Involved in peptide bond synthesis. Stimulates efficient translation and peptide-bond synthesis on native or reconstituted 70S ribosomes in vitro. Probably functions indirectly by altering the affinity of the ribosome for aminoacyl-tRNA, thus increasing their reactivity as acceptors for peptidyl transferase. The sequence is that of Elongation factor P from Orientia tsutsugamushi (strain Ikeda) (Rickettsia tsutsugamushi).